Reading from the N-terminus, the 466-residue chain is Replication termination factor 1 (466 aa).

2 DNA-binding domain regions span residues 94–249 and 250–421; these read RDYT…LRRK and YNPF…KKTL. 2 consecutive HTH myb-type domains span residues 251 to 304 and 305 to 363; these read NPFK…QPGE and INRS…SRDI. DNA-binding regions (H-T-H motif) lie at residues 278–300 and 336–359; these read WSLI…RDYI and WSLI…YTLI.

The protein localises to the nucleus. Mediates site-specific replication termination at the polar replication barrier RTS1, a barrier which ensures that replication of the mat1 locus in S.pombe occurs in the centromere-proximal direction. The sequence is that of Replication termination factor 1 (rtf1) from Schizosaccharomyces pombe (strain 972 / ATCC 24843) (Fission yeast).